A 303-amino-acid chain; its full sequence is Porphobilinogen deaminase (303 aa).

The residue at position 235 (Cys-235) is an S-(dipyrrolylmethanemethyl)cysteine.

This sequence belongs to the HMBS family. As to quaternary structure, monomer. Dipyrromethane is required as a cofactor.

The enzyme catalyses 4 porphobilinogen + H2O = hydroxymethylbilane + 4 NH4(+). Its pathway is porphyrin-containing compound metabolism; protoporphyrin-IX biosynthesis; coproporphyrinogen-III from 5-aminolevulinate: step 2/4. Functionally, tetrapolymerization of the monopyrrole PBG into the hydroxymethylbilane pre-uroporphyrinogen in several discrete steps. The sequence is that of Porphobilinogen deaminase from Campylobacter fetus subsp. fetus (strain 82-40).